The sequence spans 221 residues: Vesicle-associated membrane protein 714 (221 aa).

Residue Ala-2 is modified to N-acetylalanine. Over 2–190 the chain is Cytoplasmic; sequence AIVYAVVARG…RRALWMKNAK (189 aa). A Longin domain is found at 7–112; the sequence is VVARGTVVLA…AMNDEFSRVL (106 aa). The v-SNARE coiled-coil homology domain maps to 127–187; sequence TLNRVRGEVS…KRLRRALWMK (61 aa). Residues 191–211 traverse the membrane as a helical; Anchor for type IV membrane protein segment; that stretch reads LLVLLTCLIVFLLYIIIASFC. Topologically, residues 212–221 are vesicular; sequence GGITLPSCRS.

This sequence belongs to the synaptobrevin family. In terms of tissue distribution, highly expressed in leaves, stems and roots. Detected in flowers.

Its subcellular location is the golgi apparatus membrane. In terms of biological role, involved in the targeting and/or fusion of transport vesicles to their target membrane. The chain is Vesicle-associated membrane protein 714 from Arabidopsis thaliana (Mouse-ear cress).